The sequence spans 55 residues: uncharacterized protein (55 aa).

Residues Gln-17–His-44 are a coiled coil.

This is an uncharacterized protein from Bacillus subtilis (strain 168).